Here is a 245-residue protein sequence, read N- to C-terminus: rRNA adenine N-6-methyltransferase (245 aa).

Residues N10, L12, G37, E58, D83, and S100 each coordinate S-adenosyl-L-methionine.

It belongs to the class I-like SAM-binding methyltransferase superfamily. rRNA adenine N(6)-methyltransferase family.

It catalyses the reaction adenosine(2085) in 23S rRNA + 2 S-adenosyl-L-methionine = N(6)-dimethyladenosine(2085) in 23S rRNA + 2 S-adenosyl-L-homocysteine + 2 H(+). Its function is as follows. This protein produces a dimethylation of the adenine residue at position 2085 in 23S rRNA, resulting in reduced affinity between ribosomes and macrolide-lincosamide-streptogramin B antibiotics. In Streptococcus sanguinis, this protein is rRNA adenine N-6-methyltransferase.